The chain runs to 274 residues: Ribosomal RNA small subunit methyltransferase A (274 aa).

Residues Asn-28, Leu-30, Gly-55, Glu-77, Asp-103, and Asn-122 each coordinate S-adenosyl-L-methionine.

It belongs to the class I-like SAM-binding methyltransferase superfamily. rRNA adenine N(6)-methyltransferase family. RsmA subfamily.

Its subcellular location is the cytoplasm. It carries out the reaction adenosine(1518)/adenosine(1519) in 16S rRNA + 4 S-adenosyl-L-methionine = N(6)-dimethyladenosine(1518)/N(6)-dimethyladenosine(1519) in 16S rRNA + 4 S-adenosyl-L-homocysteine + 4 H(+). Functionally, specifically dimethylates two adjacent adenosines (A1518 and A1519) in the loop of a conserved hairpin near the 3'-end of 16S rRNA in the 30S particle. May play a critical role in biogenesis of 30S subunits. The chain is Ribosomal RNA small subunit methyltransferase A from Rhizobium meliloti (strain 1021) (Ensifer meliloti).